The sequence spans 917 residues: Protein translocase subunit SecA (917 aa).

ATP-binding positions include glutamine 87, 105–109 (GEGKT), and aspartate 513. Residues 834–917 (EEQMNEMEKR…YKSCHGKLTG (84 aa)) form a disordered region. Residues 839–852 (EMEKRRQEEAERQR) show a composition bias toward basic and acidic residues. Residues 862–876 (APSQLAAPATPATPE) show a composition bias toward low complexity. Residues cysteine 900, cysteine 902, cysteine 911, and histidine 912 each coordinate Zn(2+).

Belongs to the SecA family. Monomer and homodimer. Part of the essential Sec protein translocation apparatus which comprises SecA, SecYEG and auxiliary proteins SecDF-YajC and YidC. Zn(2+) is required as a cofactor.

The protein resides in the cell inner membrane. The protein localises to the cytoplasm. The enzyme catalyses ATP + H2O + cellular proteinSide 1 = ADP + phosphate + cellular proteinSide 2.. Functionally, part of the Sec protein translocase complex. Interacts with the SecYEG preprotein conducting channel. Has a central role in coupling the hydrolysis of ATP to the transfer of proteins into and across the cell membrane, serving both as a receptor for the preprotein-SecB complex and as an ATP-driven molecular motor driving the stepwise translocation of polypeptide chains across the membrane. The chain is Protein translocase subunit SecA from Saccharophagus degradans (strain 2-40 / ATCC 43961 / DSM 17024).